The chain runs to 1158 residues: Voltage-gated inwardly rectifying potassium channel KCNH2 (1158 aa).

Residues 1-402 are Cytoplasmic-facing; it reads MPVRRGHVAP…RIHRWTILHY (402 aa). A PAS domain is found at 17 to 88; it reads TIIRKFEGQS…AAQIAQALLG (72 aa). Residues 92–144 form the PAC domain; sequence RKVEIAFYRKDGSCFLCLVDVVPVKNEDGAVIMFILNFEVVMEKDMVGSPTHD. The interval 232-314 is disordered; the sequence is RALVGSSSPP…GAMHPLRGGL (83 aa). The residue at position 239 (serine 239) is a Phosphoserine. Residues 258–269 are compositionally biased toward polar residues; sequence PDASGSSCSLAR. Serine 283, serine 284, serine 319, and serine 350 each carry phosphoserine. A helical transmembrane segment spans residues 403 to 423; sequence SPFKAVWDWLILLLVIYTAVF. Over 424–449 the chain is Extracellular; the sequence is TPYSAAFLLKETEEGPPAPDCGYACQ. The helical transmembrane segment at 450 to 470 threads the bilayer; it reads PLAVVDFIVDIMFIVDILINF. Residues 471-494 lie on the Cytoplasmic side of the membrane; the sequence is RTTYVNANEEVVSHPGRIAVHYFK. Residues 495 to 515 traverse the membrane as a helical segment; that stretch reads GWFLIDMVAAIPFDLLIFGSG. The Extracellular segment spans residues 516 to 519; the sequence is SEEL. Residues 520 to 540 form a helical; Voltage-sensor membrane-spanning segment; sequence IGLLKTARLLRLVRVARKLDR. Residues 541-546 are Cytoplasmic-facing; that stretch reads YSEYGA. Residues 547-567 form a helical membrane-spanning segment; the sequence is AVLFLLMCTFALIAHWLACIW. The Extracellular segment spans residues 568–610; that stretch reads YAIGNMEQPHMDSRIGWLHNLGDQIGKPYNSSGLGGPSIKDKY. An N-linked (GlcNAc...) asparagine glycan is attached at asparagine 597. The pore-forming intramembrane region spans 611-631; sequence VTALYFTFSSLTSVGFGNVSP. A Selectivity filter motif is present at residues 623-628; the sequence is SVGFGN. Over 632–637 the chain is Extracellular; sequence NTNSEK. Residues 638 to 658 traverse the membrane as a helical segment; that stretch reads IFSICVMLIGSLMYASIFGNV. Residues 659–1158 lie on the Cytoplasmic side of the membrane; the sequence is SAIIQRLYSG…LHRHGSDPGS (500 aa). The tract at residues 741 to 841 is cNMP-binding domain; that stretch reads PFRGATKGCL…IHRDDLLEVL (101 aa). The tract at residues 869–987 is disordered; sequence GSPGSAELEG…KSSDTCNPLS (119 aa). Phosphoserine occurs at positions 870 and 873. Positions 882-891 are enriched in basic residues; it reads RQRKRKLSFR. Gly residues predominate over residues 910–926; the sequence is GRAGAGPSGRGRPGGPW. Over residues 927 to 938 the composition is skewed to low complexity; sequence GESPSSGPSSPE. Residues 959–969 show a composition bias toward pro residues; sequence SPRPPGEPPGG. At arginine 1013 the chain carries Omega-N-methylarginine. A coiled-coil region spans residues 1034-1061; it reads RGDVEGRLDALQRQLNRLETRLSADMAT. The disordered stretch occupies residues 1116-1158; the sequence is FEELPPGAPELPQDGPPRRLSLPGQLGALTSQPLHRHGSDPGS. Position 1136 is a phosphoserine (serine 1136).

The protein belongs to the potassium channel family. H (Eag) (TC 1.A.1.20) subfamily. Kv11.1/KCNH2 sub-subfamily. In terms of assembly, the potassium channel is probably composed of a homo- or heterotetrameric complex of pore-forming alpha subunits that can associate with modulating beta subunits. Interacts with DNAJB12 and DNAJB14; chaperones DNAJB12 and DNAJB14 promote tetramerization. Heteromultimer with KCNH6/ERG2 and KCNH7/ERG3. Interacts with ALG10B. Forms a stable complex with KCNE1 or KCNE2, and that this heteromultimerization regulates Inward rectifier potassium channel activity. Interacts with CANX. The core-glycosylated, but not the fully glycosylated form interacts with RNF207. Interacts with NDFIP1 and NDFIP2; this interaction decreases the cell membrane expression by targeting KCNH2, through interaction with NEDD4L, for the degradation through the multivesicular bodies (MVBs)-lysosomal pathway. In terms of processing, phosphorylated on serine and threonine residues. Phosphorylation by PKA inhibits ion conduction. As to expression, highly expressed in left and right atria of the heart, in cortex and hippocampus; detected at intermediate levels in left and right ventricle, Purkinje fibers, cerebellum, thalamus and basal ganglia; detected at low levels in liver, spleen and kidney.

It is found in the cell membrane. The catalysed reaction is K(+)(in) = K(+)(out). Pore-forming (alpha) subunit of voltage-gated inwardly rectifying potassium channel. Characterized by unusual gating kinetics by producing relatively small outward currents during membrane depolarization and large inward currents during subsequent repolarization which reflect a rapid inactivation during depolarization and quick recovery from inactivation but slow deactivation (closing) during repolarization. Channel properties are modulated by cAMP and subunit assembly. Forms a stable complex with KCNE1 or KCNE2, and that this heteromultimerization regulates inward rectifier potassium channel activity. The polypeptide is Voltage-gated inwardly rectifying potassium channel KCNH2 (Canis lupus familiaris (Dog)).